We begin with the raw amino-acid sequence, 488 residues long: Aspartyl/glutamyl-tRNA(Asn/Gln) amidotransferase subunit B (488 aa).

Belongs to the GatB/GatE family. GatB subfamily. Heterotrimer of A, B and C subunits.

The enzyme catalyses L-glutamyl-tRNA(Gln) + L-glutamine + ATP + H2O = L-glutaminyl-tRNA(Gln) + L-glutamate + ADP + phosphate + H(+). It catalyses the reaction L-aspartyl-tRNA(Asn) + L-glutamine + ATP + H2O = L-asparaginyl-tRNA(Asn) + L-glutamate + ADP + phosphate + 2 H(+). Functionally, allows the formation of correctly charged Asn-tRNA(Asn) or Gln-tRNA(Gln) through the transamidation of misacylated Asp-tRNA(Asn) or Glu-tRNA(Gln) in organisms which lack either or both of asparaginyl-tRNA or glutaminyl-tRNA synthetases. The reaction takes place in the presence of glutamine and ATP through an activated phospho-Asp-tRNA(Asn) or phospho-Glu-tRNA(Gln). The chain is Aspartyl/glutamyl-tRNA(Asn/Gln) amidotransferase subunit B from Ralstonia pickettii (strain 12J).